Here is a 91-residue protein sequence, read N- to C-terminus: Potassium channel toxin TdiKIK (91 aa).

A signal peptide spans 1–25 (MVATNRCCVFALLVALLLIHSLAEA). Residues 26–44 (GKGKEVLGKIKNKLVEVKE) constitute a propeptide that is removed on maturation. One can recognise a BetaSPN-type CS-alpha/beta domain in the interval 58-91 (EYACPVIDKFCEDHCAAKNAIGKCDDFKCQCLNS). Cystine bridges form between Cys61-Cys81, Cys68-Cys86, and Cys72-Cys88.

Expressed by the venom gland.

It localises to the secreted. Its function is as follows. The full peptide presents antibacterial and cytotoxic activities. The synthetic C-terminus (AA 33-76) inhibits voltage-gated potassium channels Kv1.1/KCNA1, Kv1.2/KCNA2, and Kv1.3/KCNA3. The polypeptide is Potassium channel toxin TdiKIK (Tityus discrepans (Venezuelan scorpion)).